Here is a 184-residue protein sequence, read N- to C-terminus: Autophagy-related protein 101 (184 aa).

Belongs to the ATG101 family. In terms of assembly, component of the atg1 kinase complex composed of at least atg1, atg13, atg17 and atg101. Interacts directly with atg13.

The protein resides in the cytoplasm. It is found in the nucleus. The protein localises to the preautophagosomal structure membrane. Functionally, autophagy factor required for autophagosome formation. Component of the atg1 kinase complex in which it stabilizes atg13. Is also responsible for recruiting downstream factors to the autophagosome-formation site. Has a role in meiosis and sporulation. The sequence is that of Autophagy-related protein 101 from Schizosaccharomyces pombe (strain 972 / ATCC 24843) (Fission yeast).